We begin with the raw amino-acid sequence, 112 residues long: MSNRSITLLQRVDNATEQLNSKFTDIVNSAKVSSKDKSALAMETYLVEESTSAMVRSLEDLLFVTRSLKEAWILGQIRPVVNKPEDGGEGQLADELLDKIEDTSDGVDKETA.

The interval 83 to 112 (KPEDGGEGQLADELLDKIEDTSDGVDKETA) is disordered. The segment covering 96-112 (LLDKIEDTSDGVDKETA) has biased composition (basic and acidic residues).

This sequence belongs to the Mediator complex subunit 22 family. Component of the Mediator complex.

Its subcellular location is the nucleus. Functionally, component of the Mediator complex, a coactivator involved in the regulated transcription of nearly all RNA polymerase II-dependent genes. Mediator functions as a bridge to convey information from gene-specific regulatory proteins to the basal RNA polymerase II transcription machinery. Mediator is recruited to promoters by direct interactions with regulatory proteins and serves as a scaffold for the assembly of a functional preinitiation complex with RNA polymerase II and the general transcription factors. This is Mediator of RNA polymerase II transcription subunit 22 (SRB6) from Yarrowia lipolytica (strain CLIB 122 / E 150) (Yeast).